The following is a 370-amino-acid chain: Sphingosine 1-phosphate receptor 2 (370 aa).

The Extracellular segment spans residues 1–57; it reads MTTCRLFAGFCQAVTMSKYSQYFNKTLIQVHYLTAKEMTAEELRDRIESKQSLSSLN. N-linked (GlcNAc...) asparagine glycosylation occurs at asparagine 24. The helical transmembrane segment at 58 to 78 threads the bilayer; sequence ILFVVICSIIILENLLVLIAV. The Cytoplasmic segment spans residues 79 to 87; it reads FRNKKFHSA. A helical transmembrane segment spans residues 88-108; that stretch reads MFFFIGNLAFSDLLAGSAYIA. Residues 109–128 lie on the Extracellular side of the membrane; the sequence is NIFLSGPRTFHLTPVQWFIR. Residues 129-149 traverse the membrane as a helical segment; the sequence is EGTAFIALSASVFSLLAIAIE. Residues 150–167 are Cytoplasmic-facing; the sequence is RYIAITKVKVYGSNKTCR. The helical transmembrane segment at 168–193 threads the bilayer; that stretch reads MFLLIGACWVMSILLGGLPIIGWNCI. Residues 194–219 lie on the Extracellular side of the membrane; that stretch reads NNLDDCSAVLPLNTRYYIRFVVTIFS. The chain crosses the membrane as a helical span at residues 220–230; the sequence is IILLSIVILYV. Residues 231 to 254 are Cytoplasmic-facing; it reads RIYLIVRTSHQEATNSPAYALLKT. The chain crosses the membrane as a helical span at residues 255 to 275; it reads VTIVLGVFIICWLPAFTILLL. Topologically, residues 276-289 are extracellular; it reads DTSCKMKQCPILNN. A helical transmembrane segment spans residues 290 to 310; that stretch reads AGIFFSFATLNSALNPLIYTL. The Cytoplasmic segment spans residues 311–370; the sequence is RSKDMRKEFLRVLCCWGLLNCGRPPHRCMVPLKSSSSMEHCTNKHEHQSIPIMQDCTTCV. Residue cysteine 325 is the site of S-palmitoyl cysteine attachment.

Belongs to the G-protein coupled receptor 1 family.

It is found in the cell membrane. Receptor for the lysosphingolipid sphingosine 1-phosphate (S1P). S1P receptor is critical for cell migration and epithelial integrity during vertebrate embryogenesis. Receptor for the chemokine-like protein FAM19A5. Mediates the inhibitory effect of FAM19A5 on vascular smooth muscle cell proliferation and migration. The sequence is that of Sphingosine 1-phosphate receptor 2 (s1pr2) from Danio rerio (Zebrafish).